The following is a 128-amino-acid chain: Gastrotropin (128 aa).

An N-acetylalanine modification is found at Ala-2.

It belongs to the calycin superfamily. Fatty-acid binding protein (FABP) family. As to expression, found exclusively in the ileum and to a lesser extent in distal jejunum.

The protein localises to the cytoplasm. The protein resides in the membrane. In terms of biological role, binds to bile acids and is involved in enterohepatic bile acid metabolism. Required for efficient apical to basolateral transport of conjugated bile acids in ileal enterocytes. Stimulates gastric acid and pepsinogen secretion. In Sus scrofa (Pig), this protein is Gastrotropin (FABP6).